Reading from the N-terminus, the 330-residue chain is Cyclic AMP receptor-like protein E (330 aa).

Residues 1 to 10 (MLSLSSYVLN) are Extracellular-facing. Residues 11–31 (LVGSILCLIGCLFIIGHFFWI) traverse the membrane as a helical segment. Residues 32 to 40 (PLLRTSLSR) lie on the Cytoplasmic side of the membrane. A helical transmembrane segment spans residues 41–61 (IIIYPTFILLLYDMVSFPSFI). Residues 62 to 85 (SKTADLYIERSTIICNFQEAIIQY) are Extracellular-facing. Residues 86-106 (LILSNFIWSVCISVNLLYLCF) form a helical membrane-spanning segment. The Cytoplasmic segment spans residues 107–116 (SPNKNLKKNE). Residues 117-137 (LLYHLCSWGIPLIVVVITKIP) form a helical membrane-spanning segment. Over 138 to 156 (NMISDNGNQCRFKSPNYIK) the chain is Extracellular. The chain crosses the membrane as a helical span at residues 157–177 (FYLETILFIAFMLFNFIVAFI). The Cytoplasmic segment spans residues 178-213 (TIKHIISGNLRESETTTTSVLFVNEKKITTKKIVWR). A helical membrane pass occupies residues 214 to 234 (LLLYPSILSICYIMTLVLSIY). The Extracellular segment spans residues 235-274 (QFSTESYGSGGAYANSINNKRNDKNTESGNSNNNNNSYIE). The N-linked (GlcNAc...) asparagine glycan is linked to asparagine 269. Residues 275-295 (ILLYISKAIFLLQGFFNALVY) form a helical membrane-spanning segment. Over 296-330 (LRSSKLRDRYKKITIFRKIFWRDEADYQSINDGFN) the chain is Cytoplasmic.

This sequence belongs to the G-protein coupled receptor 5 family.

The protein localises to the membrane. In terms of biological role, receptor for cAMP. The polypeptide is Cyclic AMP receptor-like protein E (crlE) (Dictyostelium discoideum (Social amoeba)).